The primary structure comprises 618 residues: Serine/threonine-protein kinase pkn1 (618 aa).

One can recognise a Protein kinase domain in the interval 15–381; that stretch reads YKILCYLRKG…KEEVKPQPLF (367 aa). ATP-binding positions include 21–29 and Lys-44; that span reads LRKGLWCQD.

This sequence belongs to the protein kinase superfamily. Ser/Thr protein kinase family. Autophosphorylated on serine and threonine residues.

The catalysed reaction is L-seryl-[protein] + ATP = O-phospho-L-seryl-[protein] + ADP + H(+). The enzyme catalyses L-threonyl-[protein] + ATP = O-phospho-L-threonyl-[protein] + ADP + H(+). Together with the serine/threonine kinase PknD, may play a role in the specific interactions with host proteins during intracellular growth. The protein is Serine/threonine-protein kinase pkn1 (pkn1) of Chlamydia caviae (strain ATCC VR-813 / DSM 19441 / 03DC25 / GPIC) (Chlamydophila caviae).